Reading from the N-terminus, the 602-residue chain is Probable translation initiation factor IF-2 (602 aa).

Residues 15-230 enclose the tr-type G domain; the sequence is LRTPIVAVLG…VLMGLSQRYL (216 aa). The G1 stretch occupies residues 24–31; sequence GHVDHGKT. 24 to 31 provides a ligand contact to GTP; it reads GHVDHGKT. The tract at residues 49–53 is G2; sequence AITQH. The segment at 86 to 89 is G3; the sequence is DTPG. GTP contacts are provided by residues 86–90 and 140–143; these read DTPGH and NKID. Residues 140 to 143 are G4; sequence NKID. The segment at 208 to 210 is G5; sequence SAE.

This sequence belongs to the TRAFAC class translation factor GTPase superfamily. Classic translation factor GTPase family. IF-2 subfamily.

Functionally, function in general translation initiation by promoting the binding of the formylmethionine-tRNA to ribosomes. Seems to function along with eIF-2. This Natronomonas pharaonis (strain ATCC 35678 / DSM 2160 / CIP 103997 / JCM 8858 / NBRC 14720 / NCIMB 2260 / Gabara) (Halobacterium pharaonis) protein is Probable translation initiation factor IF-2.